The sequence spans 155 residues: SsrA-binding protein (155 aa).

It belongs to the SmpB family.

It localises to the cytoplasm. Functionally, required for rescue of stalled ribosomes mediated by trans-translation. Binds to transfer-messenger RNA (tmRNA), required for stable association of tmRNA with ribosomes. tmRNA and SmpB together mimic tRNA shape, replacing the anticodon stem-loop with SmpB. tmRNA is encoded by the ssrA gene; the 2 termini fold to resemble tRNA(Ala) and it encodes a 'tag peptide', a short internal open reading frame. During trans-translation Ala-aminoacylated tmRNA acts like a tRNA, entering the A-site of stalled ribosomes, displacing the stalled mRNA. The ribosome then switches to translate the ORF on the tmRNA; the nascent peptide is terminated with the 'tag peptide' encoded by the tmRNA and targeted for degradation. The ribosome is freed to recommence translation, which seems to be the essential function of trans-translation. The sequence is that of SsrA-binding protein from Lawsonia intracellularis (strain PHE/MN1-00).